Consider the following 388-residue polypeptide: Succinate--CoA ligase [ADP-forming] subunit beta (388 aa).

The 236-residue stretch at 9-244 (KSLFAEYGLP…PSQDDAREAH (236 aa)) folds into the ATP-grasp domain. ATP-binding positions include lysine 46, 53–55 (GRG), glutamate 99, threonine 102, and glutamate 107. Mg(2+) is bound by residues asparagine 199 and aspartate 213. Substrate contacts are provided by residues asparagine 264 and 321 to 323 (GIV).

This sequence belongs to the succinate/malate CoA ligase beta subunit family. As to quaternary structure, heterotetramer of two alpha and two beta subunits. Mg(2+) serves as cofactor.

It carries out the reaction succinate + ATP + CoA = succinyl-CoA + ADP + phosphate. The enzyme catalyses GTP + succinate + CoA = succinyl-CoA + GDP + phosphate. Its pathway is carbohydrate metabolism; tricarboxylic acid cycle; succinate from succinyl-CoA (ligase route): step 1/1. Functionally, succinyl-CoA synthetase functions in the citric acid cycle (TCA), coupling the hydrolysis of succinyl-CoA to the synthesis of either ATP or GTP and thus represents the only step of substrate-level phosphorylation in the TCA. The beta subunit provides nucleotide specificity of the enzyme and binds the substrate succinate, while the binding sites for coenzyme A and phosphate are found in the alpha subunit. In Shewanella denitrificans (strain OS217 / ATCC BAA-1090 / DSM 15013), this protein is Succinate--CoA ligase [ADP-forming] subunit beta.